We begin with the raw amino-acid sequence, 205 residues long: Large ribosomal subunit protein bL25 (205 aa).

The disordered stretch occupies residues 184–205 (QPAGAVSEAAEGGEAAGETPAA). Low complexity predominate over residues 186 to 205 (AGAVSEAAEGGEAAGETPAA).

This sequence belongs to the bacterial ribosomal protein bL25 family. CTC subfamily. As to quaternary structure, part of the 50S ribosomal subunit; part of the 5S rRNA/L5/L18/L25 subcomplex. Contacts the 5S rRNA. Binds to the 5S rRNA independently of L5 and L18.

This is one of the proteins that binds to the 5S RNA in the ribosome where it forms part of the central protuberance. The polypeptide is Large ribosomal subunit protein bL25 (Cupriavidus necator (strain ATCC 17699 / DSM 428 / KCTC 22496 / NCIMB 10442 / H16 / Stanier 337) (Ralstonia eutropha)).